The primary structure comprises 426 residues: High affinity 3',5'-cyclic-AMP phosphodiesterase 7A (426 aa).

Residues 80 to 402 (LDEDYNGQAK…ASWKGLQRQQ (323 aa)) form the PDEase domain. Histidine 156 functions as the Proton donor in the catalytic mechanism. The a divalent metal cation site is built by histidine 160, histidine 196, aspartate 197, and aspartate 306.

Belongs to the cyclic nucleotide phosphodiesterase family. PDE7 subfamily. In terms of assembly, interacts with CBFA2T3. A divalent metal cation is required as a cofactor.

Its subcellular location is the cytoplasm. It is found in the cytosol. The enzyme catalyses 3',5'-cyclic AMP + H2O = AMP + H(+). The protein operates within purine metabolism; 3',5'-cyclic AMP degradation; AMP from 3',5'-cyclic AMP: step 1/1. Functionally, hydrolyzes the second messenger cAMP, which is a key regulator of many important physiological processes. May have a role in muscle signal transduction. This is High affinity 3',5'-cyclic-AMP phosphodiesterase 7A (Pde7a) from Rattus norvegicus (Rat).